The following is a 207-amino-acid chain: Ribosomal RNA small subunit methyltransferase G (207 aa).

Residues Gly-73, Leu-78, 124 to 125 (VE), and Arg-139 each bind S-adenosyl-L-methionine.

This sequence belongs to the methyltransferase superfamily. RNA methyltransferase RsmG family.

Its subcellular location is the cytoplasm. The enzyme catalyses guanosine(527) in 16S rRNA + S-adenosyl-L-methionine = N(7)-methylguanosine(527) in 16S rRNA + S-adenosyl-L-homocysteine. Specifically methylates the N7 position of guanine in position 527 of 16S rRNA. This chain is Ribosomal RNA small subunit methyltransferase G, found in Escherichia fergusonii (strain ATCC 35469 / DSM 13698 / CCUG 18766 / IAM 14443 / JCM 21226 / LMG 7866 / NBRC 102419 / NCTC 12128 / CDC 0568-73).